A 79-amino-acid polypeptide reads, in one-letter code: Small ribosomal subunit protein bS18 (79 aa).

The protein belongs to the bacterial ribosomal protein bS18 family. Part of the 30S ribosomal subunit. Forms a tight heterodimer with protein bS6.

In terms of biological role, binds as a heterodimer with protein bS6 to the central domain of the 16S rRNA, where it helps stabilize the platform of the 30S subunit. This chain is Small ribosomal subunit protein bS18, found in Bacillus velezensis (strain DSM 23117 / BGSC 10A6 / LMG 26770 / FZB42) (Bacillus amyloliquefaciens subsp. plantarum).